The chain runs to 682 residues: Glutamine--fructose-6-phosphate aminotransferase [isomerizing] 2 (682 aa).

Residue cysteine 2 is the For GATase activity of the active site. Residues 2–288 (CGIFAYMNYR…DDDIAAVADG (287 aa)) form the Glutamine amidotransferase type-2 domain. Serine 244 bears the Phosphoserine mark. SIS domains are found at residues 360–499 (HLKE…DRIS) and 531–672 (LALE…VDFP). Substrate is bound by residues 377–378 (TS), 422–424 (SQS), threonine 427, and histidine 578.

The enzyme catalyses D-fructose 6-phosphate + L-glutamine = D-glucosamine 6-phosphate + L-glutamate. It participates in nucleotide-sugar biosynthesis; UDP-N-acetyl-alpha-D-glucosamine biosynthesis; alpha-D-glucosamine 6-phosphate from D-fructose 6-phosphate: step 1/1. Its function is as follows. Controls the flux of glucose into the hexosamine pathway. Most likely involved in regulating the availability of precursors for N- and O-linked glycosylation of proteins. The chain is Glutamine--fructose-6-phosphate aminotransferase [isomerizing] 2 (Gfpt2) from Mus musculus (Mouse).